A 155-amino-acid chain; its full sequence is Small ribosomal subunit protein uS17 (155 aa).

It belongs to the universal ribosomal protein uS17 family. Component of the small ribosomal subunit. Mature ribosomes consist of a small (40S) and a large (60S) subunit. The 40S subunit contains about 32 different proteins and 1 molecule of RNA (18S). The 60S subunit contains 45 different proteins and 3 molecules of RNA (25S, 5.8S and 5S).

It is found in the cytoplasm. Its function is as follows. Component of the ribosome, a large ribonucleoprotein complex responsible for the synthesis of proteins in the cell. The small ribosomal subunit (SSU) binds messenger RNAs (mRNAs) and translates the encoded message by selecting cognate aminoacyl-transfer RNA (tRNA) molecules. The large subunit (LSU) contains the ribosomal catalytic site termed the peptidyl transferase center (PTC), which catalyzes the formation of peptide bonds, thereby polymerizing the amino acids delivered by tRNAs into a polypeptide chain. The nascent polypeptides leave the ribosome through a tunnel in the LSU and interact with protein factors that function in enzymatic processing, targeting, and the membrane insertion of nascent chains at the exit of the ribosomal tunnel. This is Small ribosomal subunit protein uS17 from Candida albicans (strain SC5314 / ATCC MYA-2876) (Yeast).